We begin with the raw amino-acid sequence, 364 residues long: Probable dual-specificity RNA methyltransferase RlmN (364 aa).

Catalysis depends on Glu107, which acts as the Proton acceptor. Residues 113–346 form the Radical SAM core domain; it reads HDYGNSVCVT…ATIRREQGSD (234 aa). Cysteines 120 and 351 form a disulfide. [4Fe-4S] cluster contacts are provided by Cys127, Cys131, and Cys134. Residues 177 to 178, Ser209, 232 to 234, and Asn308 each bind S-adenosyl-L-methionine; these read GE and SLH. Cys351 acts as the S-methylcysteine intermediate in catalysis.

Belongs to the radical SAM superfamily. RlmN family. It depends on [4Fe-4S] cluster as a cofactor.

The protein resides in the cytoplasm. It catalyses the reaction adenosine(2503) in 23S rRNA + 2 reduced [2Fe-2S]-[ferredoxin] + 2 S-adenosyl-L-methionine = 2-methyladenosine(2503) in 23S rRNA + 5'-deoxyadenosine + L-methionine + 2 oxidized [2Fe-2S]-[ferredoxin] + S-adenosyl-L-homocysteine. The catalysed reaction is adenosine(37) in tRNA + 2 reduced [2Fe-2S]-[ferredoxin] + 2 S-adenosyl-L-methionine = 2-methyladenosine(37) in tRNA + 5'-deoxyadenosine + L-methionine + 2 oxidized [2Fe-2S]-[ferredoxin] + S-adenosyl-L-homocysteine. In terms of biological role, specifically methylates position 2 of adenine 2503 in 23S rRNA and position 2 of adenine 37 in tRNAs. Confers resistance to some classes of antibiotics. In Staphylococcus aureus (strain MW2), this protein is Probable dual-specificity RNA methyltransferase RlmN.